Reading from the N-terminus, the 92-residue chain is Elongation factor 1-beta (92 aa).

The protein belongs to the EF-1-beta/EF-1-delta family.

Promotes the exchange of GDP for GTP in EF-1-alpha/GDP, thus allowing the regeneration of EF-1-alpha/GTP that could then be used to form the ternary complex EF-1-alpha/GTP/AAtRNA. This chain is Elongation factor 1-beta, found in Pyrobaculum neutrophilum (strain DSM 2338 / JCM 9278 / NBRC 100436 / V24Sta) (Thermoproteus neutrophilus).